The following is a 411-amino-acid chain: Histidine--tRNA ligase (411 aa).

The protein belongs to the class-II aminoacyl-tRNA synthetase family. In terms of assembly, homodimer.

Its subcellular location is the cytoplasm. It carries out the reaction tRNA(His) + L-histidine + ATP = L-histidyl-tRNA(His) + AMP + diphosphate + H(+). The protein is Histidine--tRNA ligase of Dictyoglomus turgidum (strain DSM 6724 / Z-1310).